Here is an 829-residue protein sequence, read N- to C-terminus: MKRSRVPSTSEDSDNGSNSTSWSQHSNSKHRKQSGKRPSEVFRTDLITAMKLHDSHQLNPEDYYELADPWRQEWEKGVQVPVSPESIPQCAVRTVAEKSTAPLFIKPKKLIRSSESSMLGYVGIQTLADGMCRYDLNEEDVAWLQITNEEFSKMGMQPLDELTMERVMEEFERRCYDNMSHAMETEEGLGIEYDEDVVCDVCQSPDGEDGNEMVFCDKCNICVHQACYGILKVPEGSWLCRTCALGIFPKCHLCPKKGGAMKPTRSGTKWVHVSCALWIPEVSIGNPEKMEPITNVSHIPSNRWALICCLCKEKTGACIQCSAKSCRVAFHVTCGLHCGLKMNTILTEADEVKFKSFCPKHSGLDWNEEEGDDDRPVKVPTREDRSRNRGIDFSASSQTRLSQNPEETRLSERKLRVQQLEDEFYRFVAADEVAEHLQLPLEMVDILFQYWKLKRKVNFNQPLIMPKKEEEDSLARREQEVLLRRLRLFTHLRQDLERVRNLTYMVSRRERIKRTLCRVQEQIFHHHVRLLEQGRVTGVSSTRRLEEAMFYFRTTPPVPASPQPLKGHCGQNSTLSSSEKGSNSYRSSKHIEADKPAKMLMDGVPSSGDSVRSETVMSASSRRSEGRTRSGESHRKEEESERPLEDRRRKSKLWDQVSIKDKLRHAKSMEDTLSSETELDTMDDRLLLSHTNANSVATAPNMYSGSPRKTNASHQGKLVPNGTSGRHLKNWGSFRIPKRSERTSAGRQTERQEADNTADQNSSLKTFSTSPSSPQIRTRLRTGSENRRHLEESDLGQSEQGKRCHTQRLPSPMTRRYGSDVIQRGVLAS.

Residues 1-10 (MKRSRVPSTS) are compositionally biased toward polar residues. The disordered stretch occupies residues 1–40 (MKRSRVPSTSEDSDNGSNSTSWSQHSNSKHRKQSGKRPSE). A compositionally biased stretch (low complexity) spans 15-26 (NGSNSTSWSQHS). The segment at 196–246 (DVVCDVCQSPDGEDGNEMVFCDKCNICVHQACYGILKVPEGSWLCRTCALG) adopts a PHD-type 1 zinc-finger fold. The C2HC pre-PHD-type zinc finger occupies 248-282 (FPKCHLCPKKGGAMKPTRSGTKWVHVSCALWIPEV). A PHD-type 2 zinc finger spans residues 306–362 (LICCLCKEKTGACIQCSAKSCRVAFHVTCGLHCGLKMNTILTEADEVKFKSFCPKHS). Disordered stretches follow at residues 368–408 (EEEG…PEET), 556–651 (PPVP…RRKS), and 697–829 (ATAP…VLAS). Over residues 374–390 (DRPVKVPTREDRSRNRG) the composition is skewed to basic and acidic residues. 3 stretches are compositionally biased toward polar residues: residues 394–405 (SASSQTRLSQNP), 570–586 (GQNS…NSYR), and 607–619 (SGDS…VMSA). Basic and acidic residues predominate over residues 622 to 648 (RRSEGRTRSGESHRKEEESERPLEDRR). Positions 697–714 (ATAPNMYSGSPRKTNASH) are enriched in polar residues. Residues 738–754 (KRSERTSAGRQTERQEA) are compositionally biased toward basic and acidic residues. Residues 762–774 (SSLKTFSTSPSSP) are compositionally biased toward low complexity. A compositionally biased stretch (basic and acidic residues) spans 782–792 (TGSENRRHLEE).

Belongs to the JADE family. Component of the HBO1 complex composed.

It localises to the nucleus. The protein resides in the chromosome. It is found in the cytoplasm. Its subcellular location is the cytoskeleton. The protein localises to the cilium basal body. Scaffold subunit of some HBO1 complexes, which have a histone H4 acetyltransferase activity. Plays a key role in HBO1 complex by directing KAT7/HBO1 specificity towards histone H4 acetylation (H4K5ac, H4K8ac and H4K12ac), regulating DNA replication initiation, regulating DNA replication initiation. This chain is Protein Jade-1 (jade1), found in Danio rerio (Zebrafish).